Reading from the N-terminus, the 843-residue chain is Protein P (843 aa).

A terminal protein domain (TP) region spans residues 1-177; the sequence is MPLSYPHFRK…FCGSPYSWEQ (177 aa). The spacer stretch occupies residues 178–346; sequence ELQHGSTSLN…YCLSHIINLL (169 aa). Disordered stretches follow at residues 228–259 and 283–314; these read KQGQLANGKQGRSGRLRSRVHTPTRWPAGVEP and EKANPSLSTSKRHTSTGNAVELNPVPPSSVGS. Residues 239 to 249 are compositionally biased toward basic residues; that stretch reads RSGRLRSRVHT. Residues 347 to 690 form a polymerase/reverse transcriptase domain (RT) region; that stretch reads EDWGPCYEHG…YMNLYPVARQ (344 aa). Positions 357 to 600 constitute a Reverse transcriptase domain; it reads QHYIRTPRTP…YSLHFMGYVI (244 aa). The Mg(2+) site is built by Asp-429, Asp-551, and Asp-552.

Belongs to the hepadnaviridae P protein family.

It carries out the reaction DNA(n) + a 2'-deoxyribonucleoside 5'-triphosphate = DNA(n+1) + diphosphate. The enzyme catalyses Endonucleolytic cleavage to 5'-phosphomonoester.. Activated by host HSP70 and HSP40 in vitro to be able to bind the epsilon loop of the pgRNA. Because deletion of the RNase H region renders the protein partly chaperone-independent, the chaperones may be needed indirectly to relieve occlusion of the RNA-binding site by this domain. Inhibited by several reverse-transcriptase inhibitors: Lamivudine, Adefovir and Entecavir. Multifunctional enzyme that converts the viral RNA genome into dsDNA in viral cytoplasmic capsids. This enzyme displays a DNA polymerase activity that can copy either DNA or RNA templates, and a ribonuclease H (RNase H) activity that cleaves the RNA strand of RNA-DNA heteroduplexes in a partially processive 3'- to 5'-endonucleasic mode. Neo-synthesized pregenomic RNA (pgRNA) are encapsidated together with the P protein, and reverse-transcribed inside the nucleocapsid. Initiation of reverse-transcription occurs first by binding the epsilon loop on the pgRNA genome, and is initiated by protein priming, thereby the 5'-end of (-)DNA is covalently linked to P protein. Partial (+)DNA is synthesized from the (-)DNA template and generates the relaxed circular DNA (RC-DNA) genome. After budding and infection, the RC-DNA migrates in the nucleus, and is converted into a plasmid-like covalently closed circular DNA (cccDNA). The activity of P protein does not seem to be necessary for cccDNA generation, and is presumably released from (+)DNA by host nuclear DNA repair machinery. The polypeptide is Protein P (Homo sapiens (Human)).